The chain runs to 334 residues: MSFTVWSKTEPFKLSAVQESLITLEHDNKRLLLTYREESKTWDIDLNGFQDMDVNEILQLAFLSIFYVFPTLRTEVVLQWANIESQKGTLSLPVEYNELEGNVSIDRMSFWQIPSPWMYTRCSDWPLSYLPNQVIRRPKCPKPGSTLYERFIPSLNETLSFVSLDIEQHLQYFHEWQNKPRVEYFWNESGSWDQHHEYLTTLQNDPHSFGVIGCFNDVPFAYFEVYWVPEDRIAPFAQPWHTHDRGFHALVGNDKFRGPHRVPVWLSSITHMLFLDDPRTQRVLLEPRIDNSKFINYLIEENYSKRLEFNFPHKRAAFMEITRNMFFSCLGPRI.

His-248 lines the substrate pocket. The active-site Proton acceptor is Glu-286.

The protein belongs to the lysine N-acyltransferase mbtK family.

The protein resides in the cytoplasm. It is found in the nucleus. This chain is Putative lysine N-acyltransferase C17G9.06c, found in Schizosaccharomyces pombe (strain 972 / ATCC 24843) (Fission yeast).